The chain runs to 862 residues: Pentatricopeptide repeat-containing protein At1g74850, chloroplastic (862 aa).

A chloroplast-targeting transit peptide spans 1–66 (MNLAIPNPNS…DLVLGNPSVS (66 aa)). PPR repeat units lie at residues 104-139 (SLND…WCKP), 140-174 (NEHI…GVSR), 175-209 (SVFS…KISP), 210-245 (SILT…GIQP), 246-280 (DIVT…GIVP), 281-315 (DLTT…GSLP), 316-350 (DITS…GCTP), 351-385 (NANT…NTDP), 386-420 (DAAT…NIEP), 421-455 (DMET…DIVP), 456-490 (SSKA…GSNP), 491-525 (SIET…GIPR), 526-560 (NRDT…RCDP), 561-595 (DERT…DILP), and 596-630 (SIMC…RVSN). One can recognise a Smr domain in the interval 713–801 (VDVHRMSEGG…RIMCQRSQLK (89 aa)). A disordered region spans residues 831-862 (GTRASTSSDTNHSGNPTQRRTRTKKELAGSTA). The span at 833 to 848 (RASTSSDTNHSGNPTQ) shows a compositional bias: polar residues.

The protein belongs to the PPR family. P subfamily. In terms of tissue distribution, mostly expressed in leaves, stems and flowers, but barely in roots.

The protein localises to the plastid. Its subcellular location is the chloroplast. Involved in plastid gene expression. This is Pentatricopeptide repeat-containing protein At1g74850, chloroplastic (PTAC2) from Arabidopsis thaliana (Mouse-ear cress).